Consider the following 448-residue polypeptide: Methionine aminopeptidase 2-1 (448 aa).

The interval 1 to 90 (MAAQASEKLE…PPRVPVSSLF (90 aa)) is disordered. The segment covering 22-33 (AAGPAKAGQADA) has biased composition (low complexity). Acidic residues predominate over residues 34-46 (GEVEDESDDDADD). Residues 47-58 (AGAAADGAANGA) are compositionally biased toward low complexity. Residues 59 to 74 (AKKKKKRKSKKKKKGG) show a composition bias toward basic residues. Residues 75-88 (AKVQSSPPRVPVSS) are compositionally biased toward low complexity. His-198 lines the substrate pocket. The a divalent metal cation site is built by Asp-218, Asp-229, and His-301. Substrate is bound at residue His-309. Glu-334 and Glu-429 together coordinate a divalent metal cation.

It belongs to the peptidase M24A family. Methionine aminopeptidase eukaryotic type 2 subfamily. Requires Co(2+) as cofactor. It depends on Zn(2+) as a cofactor. Mn(2+) is required as a cofactor. Fe(2+) serves as cofactor.

The protein resides in the cytoplasm. The enzyme catalyses Release of N-terminal amino acids, preferentially methionine, from peptides and arylamides.. In terms of biological role, cotranslationally removes the N-terminal methionine from nascent proteins. The N-terminal methionine is often cleaved when the second residue in the primary sequence is small and uncharged (Met-Ala-, Cys, Gly, Pro, Ser, Thr, or Val). This is Methionine aminopeptidase 2-1 from Emericella nidulans (strain FGSC A4 / ATCC 38163 / CBS 112.46 / NRRL 194 / M139) (Aspergillus nidulans).